The primary structure comprises 60 residues: UPF0434 protein Rfer_3156 (60 aa).

The protein belongs to the UPF0434 family.

The sequence is that of UPF0434 protein Rfer_3156 from Albidiferax ferrireducens (strain ATCC BAA-621 / DSM 15236 / T118) (Rhodoferax ferrireducens).